We begin with the raw amino-acid sequence, 165 residues long: Bark lectin isoform 1 (165 aa).

Residues Asn27 and Asn57 are each glycosylated (N-linked (GlcNAc...) asparagine). 2 disulfides stabilise this stretch: Cys33-Cys80 and Cys126-Cys133.

The protein belongs to the protease inhibitor I3 (leguminous Kunitz-type inhibitor) family. As to quaternary structure, dimer.

In terms of biological role, glucose and N-acetylglucosamine binding lectin. Has hemagglutinating activity against human and rabbit erythrocytes which does not require divalent cations. Inhibits factor Xa and, to a lesser extent, trypsin. Does not inhibit neutrophil elastase, human plasma kallikrein, papain, human plasmin, porcine pancreatic kallikrein and bovin chymotrypsin. Has insecticidal activity against the termite species N.corniger. Induces apoptosis in prostrate cancer cell lines DU145 and PC3. The chain is Bark lectin isoform 1 from Crateva tapia (Garlic-pear tree).